Consider the following 363-residue polypeptide: Fructose-bisphosphate aldolase (363 aa).

Residues Arg-56 and Lys-147 each coordinate substrate. The Proton acceptor role is filled by Glu-188. Residue Lys-230 is the Schiff-base intermediate with dihydroxyacetone-P of the active site.

Belongs to the class I fructose-bisphosphate aldolase family.

The enzyme catalyses beta-D-fructose 1,6-bisphosphate = D-glyceraldehyde 3-phosphate + dihydroxyacetone phosphate. It functions in the pathway carbohydrate degradation; glycolysis; D-glyceraldehyde 3-phosphate and glycerone phosphate from D-glucose: step 4/4. The chain is Fructose-bisphosphate aldolase (FBPA) from Echinococcus multilocularis (Fox tapeworm).